The following is a 232-amino-acid chain: MEKLYEGKAKEVYSTEKADEYIIRYKDDATAGNGEKKATIAGKGELNLAITTMIFEMLEKNGIKTHYIETINNTDMRVKKVTIMPLEVIVRNITAGSFAKRYGVEEGRVLNQPTFELSYKDDDLGDPLMCEDHAIALGVITKEEYDYLRKETLKINELLKEFFLKINLKLVDFKIEFGKTDDGQILLADEISPDTCRLWDKDTNKKLDKDIFRRDLGDLTEGYKEVLNRMRG.

It belongs to the SAICAR synthetase family.

It carries out the reaction 5-amino-1-(5-phospho-D-ribosyl)imidazole-4-carboxylate + L-aspartate + ATP = (2S)-2-[5-amino-1-(5-phospho-beta-D-ribosyl)imidazole-4-carboxamido]succinate + ADP + phosphate + 2 H(+). It functions in the pathway purine metabolism; IMP biosynthesis via de novo pathway; 5-amino-1-(5-phospho-D-ribosyl)imidazole-4-carboxamide from 5-amino-1-(5-phospho-D-ribosyl)imidazole-4-carboxylate: step 1/2. The sequence is that of Phosphoribosylaminoimidazole-succinocarboxamide synthase from Finegoldia magna (strain ATCC 29328 / DSM 20472 / WAL 2508) (Peptostreptococcus magnus).